A 67-amino-acid polypeptide reads, in one-letter code: Non-specific lipid-transfer protein 2 (67 aa).

Intrachain disulfides connect Cys3–Cys35, Cys11–Cys25, Cys26–Cys61, and Cys37–Cys67.

Belongs to the plant LTP family. In terms of assembly, monomer. In terms of processing, disulfide bonds.

In terms of biological role, plant non-specific lipid-transfer proteins transfer phospholipids as well as galactolipids across membranes. May play a role in wax or cutin deposition in the cell walls of expanding epidermal cells and certain secretory tissues. This chain is Non-specific lipid-transfer protein 2, found in Apium graveolens var. rapaceum (Celeriac).